We begin with the raw amino-acid sequence, 394 residues long: Methane monooxygenase component A beta chain (394 aa).

As to quaternary structure, m.trichosporium has two forms of methane monooxygenase, a soluble and a membrane-bound type. The soluble type consists of four components (A to D): protein A, comprising three chains, in an alpha-2, beta-2, gamma-2 configuration, is a nonheme iron protein containing an unusual mu-hydroxo bridge structure at its active site and interacts with both oxygen and methane.

It catalyses the reaction methane + NADH + O2 + H(+) = methanol + NAD(+) + H2O. The enzyme catalyses methane + NADPH + O2 + H(+) = methanol + NADP(+) + H2O. In terms of biological role, responsible for the initial oxygenation of methane to methanol in methanotrophs. It also catalyzes the monohydroxylation of a variety of unactivated alkenes, alicyclic, aromatic and heterocyclic compounds. The polypeptide is Methane monooxygenase component A beta chain (mmoY) (Methylosinus trichosporium).